A 199-amino-acid polypeptide reads, in one-letter code: Cytochrome c-type cyt cy (199 aa).

A helical membrane pass occupies residues 7-27 (ITKIGVTLFAVALFYGFIYML). A compositionally biased stretch (low complexity) spans 69-80 (AAETAEAAAPAE). Residues 69 to 93 (AAETAEAAAPAEPAAPPPPAYVEVD) are disordered. Residues C112, C115, H116, and M148 each contribute to the heme c site.

Binds 1 heme c group covalently per subunit.

Its subcellular location is the cell membrane. In terms of biological role, electron transfer pathways that operates during photosynthesis. This Rhodobacter capsulatus (strain ATCC BAA-309 / NBRC 16581 / SB1003) protein is Cytochrome c-type cyt cy (cycY).